A 457-amino-acid chain; its full sequence is UDP-glycosyltransferase 74C1 (457 aa).

UDP-alpha-D-glucose is bound by residues Thr-281, 336–338, 353–361, and 375–378; these read VPQ, HCGWNSTLE, and WTDQ.

Belongs to the UDP-glycosyltransferase family.

The polypeptide is UDP-glycosyltransferase 74C1 (UGT74C1) (Arabidopsis thaliana (Mouse-ear cress)).